The chain runs to 259 residues: 5'-nucleotidase SurE (259 aa).

The a divalent metal cation site is built by Asp8, Asp9, Ser41, and Asn100.

It belongs to the SurE nucleotidase family. It depends on a divalent metal cation as a cofactor.

The protein localises to the cytoplasm. The enzyme catalyses a ribonucleoside 5'-phosphate + H2O = a ribonucleoside + phosphate. Functionally, nucleotidase that shows phosphatase activity on nucleoside 5'-monophosphates. In Natranaerobius thermophilus (strain ATCC BAA-1301 / DSM 18059 / JW/NM-WN-LF), this protein is 5'-nucleotidase SurE.